The primary structure comprises 164 residues: Diphosphoinositol polyphosphate phosphohydrolase 3-beta (164 aa).

Substrate is bound by residues R9, 17 to 19 (KKR), and 38 to 40 (SSR). A Nudix hydrolase domain is found at 17 to 144 (KKRAACLCFR…VHAEYLQKLK (128 aa)). Residues G49 and E65 each contribute to the Mg(2+) site. The short motif at 50-71 (GGMEPEEEPGGAAVREVFEEAG) is the Nudix box element. The active-site Proton acceptor is the E68. E69 contacts Mg(2+). Substrate contacts are provided by residues 89 to 91 (RKH), R115, and K133. Residues 144–164 (KLGGSPTNGNSVAPSPPEGDP) are disordered.

The protein belongs to the Nudix hydrolase family. DIPP subfamily. Requires Mg(2+) as cofactor. The cofactor is Mn(2+).

It is found in the cytoplasm. The catalysed reaction is diphospho-myo-inositol polyphosphate + H2O = myo-inositol polyphosphate + phosphate.. It catalyses the reaction P(1),P(6)-bis(5'-adenosyl) hexaphosphate + H2O = adenosine 5'-pentaphosphate + AMP + 2 H(+). The enzyme catalyses P(1),P(5)-bis(5'-adenosyl) pentaphosphate + H2O = adenosine 5'-tetraphosphate + AMP + 2 H(+). Functionally, cleaves a beta-phosphate from the diphosphate groups in PP-InsP5 (diphosphoinositol pentakisphosphate), suggesting that it may play a role in signal transduction. Also able to catalyze the hydrolysis of dinucleoside oligophosphates, with Ap6A and Ap5A being the preferred substrates. The major reaction products are ADP and p4a from Ap6A and ADP and ATP from Ap5A. Also able to hydrolyze 5-phosphoribose 1-diphosphate. The protein is Diphosphoinositol polyphosphate phosphohydrolase 3-beta of Bos taurus (Bovine).